The following is a 475-amino-acid chain: NADH-quinone oxidoreductase subunit N (475 aa).

Helical transmembrane passes span 7–27 (ISIAAPEALLIGVALIGVLLG), 40–60 (LLGALALAGAAFLAASQSAVD), 74–94 (FIAIAKAVSYGVGAIALLVAG), 105–125 (FEYTLLVMFGSAGMGVMLSAN), 127–147 (LMTLYMGIETLSLSSYVLAAF), 161–181 (YFVLGALASGLLLFGCSLVYG), 191–211 (IAAADQSIGLTFGLVLILMAL), 242–262 (APKLATVAVLANIMFTVFGVY), 266–286 (WMLIIAIVSAISMLVGAFGGL), 295–315 (LAYSSIANVGYALMGVAAGEV), 321–341 (VLTYMTIYVITTLGMFGIVLA), 365–385 (LAVAMTVLVFSVAGIPPMAGF), 399–419 (ELYWLVAVGVIGSVVSLGYYL), and 448–468 (GATILAFPVLVIWIGWMTGII).

This sequence belongs to the complex I subunit 2 family. As to quaternary structure, NDH-1 is composed of 14 different subunits. Subunits NuoA, H, J, K, L, M, N constitute the membrane sector of the complex.

It is found in the cell inner membrane. It catalyses the reaction a quinone + NADH + 5 H(+)(in) = a quinol + NAD(+) + 4 H(+)(out). Functionally, NDH-1 shuttles electrons from NADH, via FMN and iron-sulfur (Fe-S) centers, to quinones in the respiratory chain. The immediate electron acceptor for the enzyme in this species is believed to be ubiquinone. Couples the redox reaction to proton translocation (for every two electrons transferred, four hydrogen ions are translocated across the cytoplasmic membrane), and thus conserves the redox energy in a proton gradient. This is NADH-quinone oxidoreductase subunit N from Hirschia baltica (strain ATCC 49814 / DSM 5838 / IFAM 1418).